The sequence spans 178 residues: ATP-dependent protease subunit HslV (178 aa).

The active site involves threonine 7. Positions 162, 165, and 168 each coordinate Na(+).

This sequence belongs to the peptidase T1B family. HslV subfamily. A double ring-shaped homohexamer of HslV is capped on each side by a ring-shaped HslU homohexamer. The assembly of the HslU/HslV complex is dependent on binding of ATP.

The protein resides in the cytoplasm. The enzyme catalyses ATP-dependent cleavage of peptide bonds with broad specificity.. Allosterically activated by HslU binding. Its function is as follows. Protease subunit of a proteasome-like degradation complex believed to be a general protein degrading machinery. This Cupriavidus pinatubonensis (strain JMP 134 / LMG 1197) (Cupriavidus necator (strain JMP 134)) protein is ATP-dependent protease subunit HslV.